The primary structure comprises 211 residues: Protein-L-isoaspartate O-methyltransferase (211 aa).

Serine 59 is a catalytic residue.

The protein belongs to the methyltransferase superfamily. L-isoaspartyl/D-aspartyl protein methyltransferase family.

The protein resides in the cytoplasm. The catalysed reaction is [protein]-L-isoaspartate + S-adenosyl-L-methionine = [protein]-L-isoaspartate alpha-methyl ester + S-adenosyl-L-homocysteine. Its function is as follows. Catalyzes the methyl esterification of L-isoaspartyl residues in peptides and proteins that result from spontaneous decomposition of normal L-aspartyl and L-asparaginyl residues. It plays a role in the repair and/or degradation of damaged proteins. This is Protein-L-isoaspartate O-methyltransferase from Ignicoccus hospitalis (strain KIN4/I / DSM 18386 / JCM 14125).